A 118-amino-acid chain; its full sequence is Basic phospholipase A2 PA-5 (118 aa).

7 cysteine pairs are disulfide-bonded: Cys11-Cys71, Cys27-Cys117, Cys29-Cys45, Cys44-Cys98, Cys51-Cys91, Cys60-Cys84, and Cys78-Cys89. Residues Tyr28, Gly30, and Gly32 each coordinate Ca(2+). His48 is an active-site residue. A Ca(2+)-binding site is contributed by Asp49. Residue Asp92 is part of the active site.

It belongs to the phospholipase A2 family. Group I subfamily. D49 sub-subfamily. Requires Ca(2+) as cofactor. As to expression, expressed by the venom gland.

It is found in the secreted. It catalyses the reaction a 1,2-diacyl-sn-glycero-3-phosphocholine + H2O = a 1-acyl-sn-glycero-3-phosphocholine + a fatty acid + H(+). Functionally, PLA2 catalyzes the calcium-dependent hydrolysis of the 2-acyl groups in 3-sn-phosphoglycerides. In Pseudechis australis (Mulga snake), this protein is Basic phospholipase A2 PA-5.